Reading from the N-terminus, the 260-residue chain is HMP-PP phosphatase (260 aa).

Aspartate 8 functions as the Nucleophile in the catalytic mechanism. Mg(2+) is bound by residues aspartate 8, aspartate 10, and aspartate 212.

Belongs to the HAD-like hydrolase superfamily. Cof family. Mg(2+) serves as cofactor.

The enzyme catalyses 4-amino-2-methyl-5-(diphosphooxymethyl)pyrimidine + H2O = 4-amino-2-methyl-5-(phosphooxymethyl)pyrimidine + phosphate + H(+). Functionally, catalyzes the hydrolysis of 4-amino-2-methyl-5-hydroxymethylpyrimidine pyrophosphate (HMP-PP) to 4-amino-2-methyl-5-hydroxymethylpyrimidine phosphate (HMP-P). The sequence is that of HMP-PP phosphatase from Shigella boydii serotype 4 (strain Sb227).